Consider the following 347-residue polypeptide: Trace amine-associated receptor 4 (347 aa).

Over 1–37 (MNTPDPWSSPEVQFCFAAANSSCPRKARPALVVCAMY) the chain is Extracellular. An N-linked (GlcNAc...) asparagine glycan is attached at Asn-20. Intrachain disulfides connect Cys-23/Cys-187 and Cys-106/Cys-191. Residues 38 to 58 (LIMIGAIVMTMLGNMAVIISI) form a helical membrane-spanning segment. At 59–69 (AHFKQLHSPTN) the chain is on the cytoplasmic side. The chain crosses the membrane as a helical span at residues 70-90 (FLILSMATTDFLLSCVVMPFS). Topologically, residues 91 to 110 (MIRSIESCWYFGDLFCKVHS) are extracellular. The helical transmembrane segment at 111–129 (CCDIMLCTTSIFHLCFISV) threads the bilayer. Residues 130–149 (DRHYAVCDPLHYVTQITTRV) are Cytoplasmic-facing. The chain crosses the membrane as a helical span at residues 150–170 (VGVFLLISWSVPIFFAFGLVF). The Extracellular segment spans residues 171–197 (SELNLIGAEDFVAAIDCTGLCVLIFNK). The interval 175 to 188 (LIGAEDFVAAIDCT) is extracellular Loop 2 (ECL2). Residues 198–218 (LWGVLASFIAFFLPGTVMVGI) traverse the membrane as a helical segment. At 219-260 (YIHIFTVAQKHARQIGTGPRTKQALSESKMKATSKKESKATK) the chain is on the cytoplasmic side. Residues 261–281 (TLSIVMGVFVLCWLPFFVLTI) form a helical membrane-spanning segment. Residues 282–296 (TDPFIDFTTPEDLYN) lie on the Extracellular side of the membrane. Residues 297 to 317 (VFLWLGYFNSTFNPIIYGMFY) traverse the membrane as a helical segment. Topologically, residues 318–347 (PWFRKALRMIVTGTIFRSDSSTSSLHPAHP) are cytoplasmic.

This sequence belongs to the G-protein coupled receptor 1 family. In terms of tissue distribution, specifically expressed in neurons of the olfactory epithelium, to discrete glomeruli predominantly localized to a confined bulb region. Present in the dorsal area of the main olfactory epithelium.

The protein localises to the cell membrane. Its function is as follows. Olfactory receptor specific for 2-phenylethylamine, a trace amine present at high concentration in the urine of carnivore species, playing a key role in fear and avoidance responses. 2-phenylethylamine acts as a kairomone in the chemical detection of carnivore odor and triggers fear in mice. This receptor is probably mediated by the G(s)-class of G-proteins which activate adenylate cyclase. In Mus musculus (Mouse), this protein is Trace amine-associated receptor 4.